Consider the following 549-residue polypeptide: Glucose-6-phosphate isomerase (549 aa).

Glu-354 functions as the Proton donor in the catalytic mechanism. Residues His-385 and Lys-513 contribute to the active site.

It belongs to the GPI family.

The protein localises to the cytoplasm. It catalyses the reaction alpha-D-glucose 6-phosphate = beta-D-fructose 6-phosphate. Its pathway is carbohydrate biosynthesis; gluconeogenesis. The protein operates within carbohydrate degradation; glycolysis; D-glyceraldehyde 3-phosphate and glycerone phosphate from D-glucose: step 2/4. Its function is as follows. Catalyzes the reversible isomerization of glucose-6-phosphate to fructose-6-phosphate. The polypeptide is Glucose-6-phosphate isomerase (Nitrosococcus oceani (strain ATCC 19707 / BCRC 17464 / JCM 30415 / NCIMB 11848 / C-107)).